Reading from the N-terminus, the 162-residue chain is Catabolic 3-dehydroquinase (162 aa).

Y24 (proton acceptor) is an active-site residue. The substrate site is built by N88, H94, and D101. The Proton donor role is filled by H114. Substrate contacts are provided by residues 115–116 (VS) and R125.

The protein belongs to the type-II 3-dehydroquinase family. Homododecamer. Adopts a ring-like structure, composed of an arrangement of two hexameric rings stacked on top of one another.

It catalyses the reaction 3-dehydroquinate = 3-dehydroshikimate + H2O. It functions in the pathway aromatic compound metabolism; 3,4-dihydroxybenzoate biosynthesis; 3,4-dihydroxybenzoate from 3-dehydroquinate: step 1/2. Is involved in the catabolism of quinate. Allows the utilization of quinate as carbon source via the beta-ketoadipate pathway. In Podospora anserina (strain S / ATCC MYA-4624 / DSM 980 / FGSC 10383) (Pleurage anserina), this protein is Catabolic 3-dehydroquinase.